A 203-amino-acid chain; its full sequence is MDMFSWQLGLPSTLACLVFGYLLGSIPFGLILTRMAGLGDVRKIGSGNIGATNVLRTGNRKLAAATLLFDALKGTAAAAIASYWGVEAGIAAGFAAFLGHLFPVWLSFRGGKGVATYIGVLLGLMPVMVLLFAAIWLAMAKITRYSSLSALVATAAVPIALYAAGNGKVAGLFAVMTAIAWIKHRANIQRLLSGTESRIGEKG.

The next 5 helical transmembrane spans lie at 13–33, 62–82, 88–108, 118–138, and 159–179; these read TLAC…LILT, LAAA…AIAS, AGIA…WLSF, IGVL…IWLA, and IALY…MTAI.

This sequence belongs to the PlsY family. As to quaternary structure, probably interacts with PlsX.

Its subcellular location is the cell inner membrane. The catalysed reaction is an acyl phosphate + sn-glycerol 3-phosphate = a 1-acyl-sn-glycero-3-phosphate + phosphate. It participates in lipid metabolism; phospholipid metabolism. Its function is as follows. Catalyzes the transfer of an acyl group from acyl-phosphate (acyl-PO(4)) to glycerol-3-phosphate (G3P) to form lysophosphatidic acid (LPA). This enzyme utilizes acyl-phosphate as fatty acyl donor, but not acyl-CoA or acyl-ACP. The protein is Glycerol-3-phosphate acyltransferase of Rhizobium meliloti (strain 1021) (Ensifer meliloti).